The chain runs to 159 residues: Photosystem I reaction center subunit XI (159 aa).

3 helical membrane-spanning segments follow: residues 53 to 73 (LEIG…LGPL), 84 to 104 (LISG…YGIV), and 125 to 145 (FTAG…TLLE).

The protein belongs to the PsaL family.

It is found in the cellular thylakoid membrane. This is Photosystem I reaction center subunit XI from Cyanothece sp. (strain PCC 7425 / ATCC 29141).